We begin with the raw amino-acid sequence, 319 residues long: ATP-dependent 6-phosphofructokinase (319 aa).

An ATP-binding site is contributed by Gly11. 21 to 25 provides a ligand contact to ADP; that stretch reads RAVVR. Residues 72 to 73 and 102 to 105 contribute to the ATP site; these read RC and GDGS. Asp103 lines the Mg(2+) pocket. 125–127 is a binding site for substrate; it reads TID. Asp127 acts as the Proton acceptor in catalysis. ADP is bound at residue Arg154. Substrate-binding positions include Arg162 and 169 to 171; that span reads MGR. ADP-binding positions include 185-187, Arg211, and 213-215; these read GAE and KKH. Residues Glu222, Arg243, and 249-252 contribute to the substrate site; that span reads HIQR.

Belongs to the phosphofructokinase type A (PFKA) family. ATP-dependent PFK group I subfamily. Prokaryotic clade 'B1' sub-subfamily. As to quaternary structure, homotetramer. Mg(2+) is required as a cofactor.

It localises to the cytoplasm. The catalysed reaction is beta-D-fructose 6-phosphate + ATP = beta-D-fructose 1,6-bisphosphate + ADP + H(+). It functions in the pathway carbohydrate degradation; glycolysis; D-glyceraldehyde 3-phosphate and glycerone phosphate from D-glucose: step 3/4. Its activity is regulated as follows. Allosterically activated by ADP and other diphosphonucleosides, and allosterically inhibited by phosphoenolpyruvate. Catalyzes the phosphorylation of D-fructose 6-phosphate to fructose 1,6-bisphosphate by ATP, the first committing step of glycolysis. This is ATP-dependent 6-phosphofructokinase from Shouchella clausii (strain KSM-K16) (Alkalihalobacillus clausii).